We begin with the raw amino-acid sequence, 428 residues long: Exodeoxyribonuclease 7 large subunit (428 aa).

Belongs to the XseA family. Heterooligomer composed of large and small subunits.

The protein localises to the cytoplasm. It catalyses the reaction Exonucleolytic cleavage in either 5'- to 3'- or 3'- to 5'-direction to yield nucleoside 5'-phosphates.. In terms of biological role, bidirectionally degrades single-stranded DNA into large acid-insoluble oligonucleotides, which are then degraded further into small acid-soluble oligonucleotides. The protein is Exodeoxyribonuclease 7 large subunit of Mycobacterium leprae (strain TN).